Here is a 444-residue protein sequence, read N- to C-terminus: MAIFRQLSLGAKAALAAGTVFVSMIVSRSYLAESLEFRAWRCLFRLQLALFVNSLMLLGSIYIWRSTVSNLRHSPAAESACFQLWKMVVAAFLALAHSSFFTMIFLVAEEPYLFSLVAYTCLGAYVIMLCFLCVLSGMEQAYQLLAWRAGRAVGSLDKTRKLALRPALAVMVTTVLSVVGLLNAAQPPAVTTVEVPVHRLPPSMNSLKIVLLSDIHLGPTVGRTKMDMFVRMVNTLEPDVTVIVGDLCDSEASVLRTAVAPLGQLRSRLGTYFVTGNHEYYTSDVSNWFALLMSLNVQPLHNENVRISATGAHREDDDWICLAGVDDIEANILHYTGHGMDLEKALEGCSPDHPTILLAHQPLAAKRALQARPDINLILSGHTHAGQIFPLNVAAYLLNPFFAGLYQVAETTFVYVSPGTAYYGIPMRLGSRAEITQLILQAAP.

Helical transmembrane passes span 7 to 27 (LSLG…MIVS), 43 to 63 (LFRL…SIYI), 87 to 107 (MVVA…IFLV), 114 to 134 (FSLV…FLCV), and 162 to 182 (LALR…VGLL). A divalent metal cation-binding residues include Asp-214, His-216, Asp-246, Asn-277, His-382, and His-384.

This sequence belongs to the metallophosphoesterase superfamily. LOC643853 family. A divalent metal cation is required as a cofactor.

It is found in the membrane. The chain is Transmembrane protein with metallophosphoesterase domain (TMPPE) from Bos taurus (Bovine).